A 510-amino-acid chain; its full sequence is Cobyric acid synthase (510 aa).

In terms of domain architecture, GATase cobBQ-type spans 249-458 (CFKVRVLVYP…LHGLFDSPDA (210 aa)). Cysteine 336 functions as the Nucleophile in the catalytic mechanism. Histidine 450 is an active-site residue.

The protein belongs to the CobB/CobQ family. CobQ subfamily.

The protein operates within cofactor biosynthesis; adenosylcobalamin biosynthesis. Functionally, catalyzes amidations at positions B, D, E, and G on adenosylcobyrinic A,C-diamide. NH(2) groups are provided by glutamine, and one molecule of ATP is hydrogenolyzed for each amidation. The sequence is that of Cobyric acid synthase from Shewanella oneidensis (strain ATCC 700550 / JCM 31522 / CIP 106686 / LMG 19005 / NCIMB 14063 / MR-1).